Consider the following 169-residue polypeptide: Thermonuclease (169 aa).

The N-terminal stretch at 1 to 26 (MKKITTGLIIVVAAIIVLSIQFMTES) is a signal peptide. Residues R65, E73, and R115 contribute to the active site.

The protein belongs to the thermonuclease family. Ca(2+) is required as a cofactor.

It localises to the secreted. It catalyses the reaction Endonucleolytic cleavage to nucleoside 3'-phosphates and 3'-phosphooligonucleotide end-products.. Its function is as follows. Enzyme that catalyzes the hydrolysis of both DNA and RNA at the 5'-position of the phosphodiester bond. This chain is Thermonuclease (nucH), found in Staphylococcus hyicus.